Reading from the N-terminus, the 701-residue chain is Translation initiation factor IF-2 (701 aa).

Residues 48 to 62 show a composition bias toward basic and acidic residues; the sequence is KIYKPEKAEQSEKSQ. Positions 48–123 are disordered; that stretch reads KIYKPEKAEQ…EPKEMPSKIT (76 aa). Low complexity-rich tracts occupy residues 63-89 and 97-109; these read QKNTQNKQQTTHNKGNQSNKGNQNNKP and NNKNNKNNKNNKQ. A compositionally biased stretch (basic and acidic residues) spans 110-119; that stretch reads PKQEEPKEMP. In terms of domain architecture, tr-type G spans 203-372; that stretch reads ERPAVVTIMG…VLTSEVQELK (170 aa). Residues 212–219 are G1; it reads GHVDHGKT. GTP is bound at residue 212–219; that stretch reads GHVDHGKT. The interval 237-241 is G2; it reads GITQH. A G3 region spans residues 258–261; the sequence is DTPG. Residues 258–262 and 312–315 each bind GTP; these read DTPGH and NKID. A G4 region spans residues 312–315; sequence NKID. The G5 stretch occupies residues 348-350; that stretch reads SAL.

It belongs to the TRAFAC class translation factor GTPase superfamily. Classic translation factor GTPase family. IF-2 subfamily.

The protein localises to the cytoplasm. One of the essential components for the initiation of protein synthesis. Protects formylmethionyl-tRNA from spontaneous hydrolysis and promotes its binding to the 30S ribosomal subunits. Also involved in the hydrolysis of GTP during the formation of the 70S ribosomal complex. This chain is Translation initiation factor IF-2, found in Staphylococcus saprophyticus subsp. saprophyticus (strain ATCC 15305 / DSM 20229 / NCIMB 8711 / NCTC 7292 / S-41).